The chain runs to 355 residues: Peptide chain release factor 1 (355 aa).

Gln-231 is subject to N5-methylglutamine. Residues 283–303 (LAKESEARKSQVGSGDRSERI) form a disordered region.

Belongs to the prokaryotic/mitochondrial release factor family. Methylated by PrmC. Methylation increases the termination efficiency of RF1.

It is found in the cytoplasm. Functionally, peptide chain release factor 1 directs the termination of translation in response to the peptide chain termination codons UAG and UAA. This is Peptide chain release factor 1 from Campylobacter lari (strain RM2100 / D67 / ATCC BAA-1060).